A 255-amino-acid polypeptide reads, in one-letter code: Thiazole synthase (255 aa).

The Schiff-base intermediate with DXP role is filled by lysine 96. 1-deoxy-D-xylulose 5-phosphate contacts are provided by residues glycine 157, 183-184 (AG), and 205-206 (NT).

This sequence belongs to the ThiG family. Homotetramer. Forms heterodimers with either ThiH or ThiS.

It localises to the cytoplasm. It carries out the reaction [ThiS sulfur-carrier protein]-C-terminal-Gly-aminoethanethioate + 2-iminoacetate + 1-deoxy-D-xylulose 5-phosphate = [ThiS sulfur-carrier protein]-C-terminal Gly-Gly + 2-[(2R,5Z)-2-carboxy-4-methylthiazol-5(2H)-ylidene]ethyl phosphate + 2 H2O + H(+). It functions in the pathway cofactor biosynthesis; thiamine diphosphate biosynthesis. Its function is as follows. Catalyzes the rearrangement of 1-deoxy-D-xylulose 5-phosphate (DXP) to produce the thiazole phosphate moiety of thiamine. Sulfur is provided by the thiocarboxylate moiety of the carrier protein ThiS. In vitro, sulfur can be provided by H(2)S. The polypeptide is Thiazole synthase (Bacillus licheniformis (strain ATCC 14580 / DSM 13 / JCM 2505 / CCUG 7422 / NBRC 12200 / NCIMB 9375 / NCTC 10341 / NRRL NRS-1264 / Gibson 46)).